A 456-amino-acid polypeptide reads, in one-letter code: UDP-N-acetylmuramate--L-alanine ligase (456 aa).

112 to 118 (GAHGKTT) is an ATP binding site.

This sequence belongs to the MurCDEF family.

It localises to the cytoplasm. It catalyses the reaction UDP-N-acetyl-alpha-D-muramate + L-alanine + ATP = UDP-N-acetyl-alpha-D-muramoyl-L-alanine + ADP + phosphate + H(+). The protein operates within cell wall biogenesis; peptidoglycan biosynthesis. Functionally, cell wall formation. The protein is UDP-N-acetylmuramate--L-alanine ligase of Desulfatibacillum aliphaticivorans.